The chain runs to 111 residues: Nucleoid-associated protein SynRCC307_0025 (111 aa).

The protein belongs to the YbaB/EbfC family. As to quaternary structure, homodimer.

Its subcellular location is the cytoplasm. The protein resides in the nucleoid. Functionally, binds to DNA and alters its conformation. May be involved in regulation of gene expression, nucleoid organization and DNA protection. This is Nucleoid-associated protein SynRCC307_0025 from Synechococcus sp. (strain RCC307).